Consider the following 318-residue polypeptide: NADH-ubiquinone oxidoreductase chain 1 (318 aa).

Helical transmembrane passes span 3 to 23, 70 to 90, 100 to 120, 146 to 166, 171 to 191, 222 to 242, 253 to 273, and 294 to 314; these read MVNL…LTLI, MFII…IPLP, LAVL…LWSG, LAII…STLI, HTWL…STLA, LFFM…AILF, ELYT…FLWI, and LPLT…MAGI.

The protein belongs to the complex I subunit 1 family.

It localises to the mitochondrion inner membrane. The catalysed reaction is a ubiquinone + NADH + 5 H(+)(in) = a ubiquinol + NAD(+) + 4 H(+)(out). Its function is as follows. Core subunit of the mitochondrial membrane respiratory chain NADH dehydrogenase (Complex I) that is believed to belong to the minimal assembly required for catalysis. Complex I functions in the transfer of electrons from NADH to the respiratory chain. The immediate electron acceptor for the enzyme is believed to be ubiquinone. This Pteropus vampyrus (Large flying fox) protein is NADH-ubiquinone oxidoreductase chain 1 (MT-ND1).